The primary structure comprises 435 residues: Glutamyl-tRNA reductase (435 aa).

Substrate is bound by residues 49 to 52, serine 109, 114 to 116, and glutamine 120; these read TCNR and EGQ. Cysteine 50 serves as the catalytic Nucleophile. 198 to 203 is an NADP(+) binding site; that stretch reads GAGRMS.

This sequence belongs to the glutamyl-tRNA reductase family. Homodimer.

The catalysed reaction is (S)-4-amino-5-oxopentanoate + tRNA(Glu) + NADP(+) = L-glutamyl-tRNA(Glu) + NADPH + H(+). Its pathway is porphyrin-containing compound metabolism; protoporphyrin-IX biosynthesis; 5-aminolevulinate from L-glutamyl-tRNA(Glu): step 1/2. It participates in porphyrin-containing compound metabolism; chlorophyll biosynthesis. Its function is as follows. Catalyzes the NADPH-dependent reduction of glutamyl-tRNA(Glu) to glutamate 1-semialdehyde (GSA). The chain is Glutamyl-tRNA reductase from Prochlorococcus marinus (strain MIT 9515).